We begin with the raw amino-acid sequence, 240 residues long: Eukaryotic translation initiation factor 3 subunit J (240 aa).

Residues 1-66 (MADDWESAAD…VPVKTKPSKA (66 aa)) form a disordered region. A compositionally biased stretch (acidic residues) spans 27–45 (GEDDDDDVKESWEDEEEKK).

It belongs to the eIF-3 subunit J family. In terms of assembly, component of the eukaryotic translation initiation factor 3 (eIF-3) complex. The eIF-3 complex interacts with pix.

It localises to the cytoplasm. In terms of biological role, component of the eukaryotic translation initiation factor 3 (eIF-3) complex, which is involved in protein synthesis of a specialized repertoire of mRNAs and, together with other initiation factors, stimulates binding of mRNA and methionyl-tRNAi to the 40S ribosome. The eIF-3 complex specifically targets and initiates translation of a subset of mRNAs involved in cell proliferation. In Drosophila persimilis (Fruit fly), this protein is Eukaryotic translation initiation factor 3 subunit J.